Reading from the N-terminus, the 98-residue chain is Large ribosomal subunit protein uL23 (98 aa).

It belongs to the universal ribosomal protein uL23 family. Part of the 50S ribosomal subunit. Contacts protein L29, and trigger factor when it is bound to the ribosome.

Functionally, one of the early assembly proteins it binds 23S rRNA. One of the proteins that surrounds the polypeptide exit tunnel on the outside of the ribosome. Forms the main docking site for trigger factor binding to the ribosome. This Streptococcus equi subsp. equi (strain 4047) protein is Large ribosomal subunit protein uL23.